The primary structure comprises 122 residues: UPF0145 protein Bmul_3577/BMULJ_04940 (122 aa).

This sequence belongs to the UPF0145 family.

The sequence is that of UPF0145 protein Bmul_3577/BMULJ_04940 from Burkholderia multivorans (strain ATCC 17616 / 249).